Reading from the N-terminus, the 616-residue chain is Zinc metalloproteinase-disintegrin-like VLAIP-A (616 aa).

The N-terminal stretch at 1 to 20 is a signal peptide; sequence MMQVLLVTISLAVFPYQGSS. A propeptide spanning residues 21–194 is cleaved from the precursor; it reads IILESGNVND…KASQLNLTPE (174 aa). A Pyrrolidone carboxylic acid modification is found at Q195. The 197-residue stretch at 203–399 folds into the Peptidase M12B domain; that stretch reads KYIKLVIVAD…KMPQCILNKP (197 aa). Intrachain disulfides connect C314/C394, C354/C378, and C356/C361. Residue H339 coordinates Zn(2+). E340 is a catalytic residue. Residues H343 and H349 each coordinate Zn(2+). An N-linked (GlcNAc...) asparagine glycan is attached at N377. One can recognise a Disintegrin domain in the interval 407-493; sequence PAVCGNYLVE…ECPTDQFQRN (87 aa). Positions 409, 412, 414, 416, 419, and 422 each coordinate Ca(2+). Intrachain disulfides connect C410–C439, C421–C434, C423–C429, C433–C456, C447–C453, C452–C478, C465–C485, C472–C504, C497–C509, C516–C566, C531–C577, C544–C554, C561–C603, and C597–C609. The D/ECD-tripeptide motif lies at 471 to 473; that stretch reads ECD.

The protein belongs to the venom metalloproteinase (M12B) family. P-III subfamily. P-IIIc sub-subfamily. As to quaternary structure, heterodimer; disulfide-linked. The cofactor is Zn(2+). The N-terminus is blocked. As to expression, expressed by the venom gland.

The protein resides in the secreted. Inhibited by EDTA or 1,10-phenanthroline. Not inhibited by PMSF. Functionally, snake venom zinc metalloprotease that hydrolyzes the alpha-chain (FGA) and more slowly the beta-chain (FGB) of fibrinogen, without affecting the gamma-chain. Cleaves alpha-chain of fibrinogen at '432-Lys-|-Leu-433' and '535-Pro-|-Met-536' bonds. Induces apoptosis in vascular endothelial cells and inhibits endothelial cell adhesion to extracellular matrix proteins such as fibrinogen, fibronectin, vitronectin, collagen I, and collagen IV. Also hydrolyzes azocasein, and insulin B-chain (at the '38-Ala-|-Leu-39' bond). In Macrovipera lebetinus (Levantine viper), this protein is Zinc metalloproteinase-disintegrin-like VLAIP-A.